Here is a 1036-residue protein sequence, read N- to C-terminus: Isoleucine--tRNA ligase (1036 aa).

Residues 46–56 carry the 'HIGH' region motif; that stretch reads PFATGLPHYGH. Positions 589–593 match the 'KMSKS' region motif; sequence KMSKR. Lys-592 contributes to the ATP binding site.

It belongs to the class-I aminoacyl-tRNA synthetase family. IleS type 2 subfamily. Monomer. Zn(2+) serves as cofactor.

The protein resides in the cytoplasm. The catalysed reaction is tRNA(Ile) + L-isoleucine + ATP = L-isoleucyl-tRNA(Ile) + AMP + diphosphate. Functionally, catalyzes the attachment of isoleucine to tRNA(Ile). As IleRS can inadvertently accommodate and process structurally similar amino acids such as valine, to avoid such errors it has two additional distinct tRNA(Ile)-dependent editing activities. One activity is designated as 'pretransfer' editing and involves the hydrolysis of activated Val-AMP. The other activity is designated 'posttransfer' editing and involves deacylation of mischarged Val-tRNA(Ile). This Chlamydia trachomatis serovar L2 (strain ATCC VR-902B / DSM 19102 / 434/Bu) protein is Isoleucine--tRNA ligase.